A 636-amino-acid polypeptide reads, in one-letter code: Asparagine synthetase domain-containing protein 1 (636 aa).

Catalysis depends on C2, which acts as the Nucleophile. The region spanning 2 to 187 is the Glutamine amidotransferase type-2 domain; the sequence is CGICCVVALS…ASGIFKMDLR (186 aa). One can recognise an Asparagine synthetase domain in the interval 291–607; the sequence is QFIDVLDEAV…GLEAASILPK (317 aa).

The protein is Asparagine synthetase domain-containing protein 1 (ASNSD1) of Gallus gallus (Chicken).